The sequence spans 360 residues: Phospho-N-acetylmuramoyl-pentapeptide-transferase (360 aa).

Transmembrane regions (helical) follow at residues 26-46 (AILG…KLIE), 74-94 (MGGL…GDLG), 97-117 (YVWV…IDDY), 134-154 (YILQ…TAAN), 168-188 (VMPQ…VGSS), 199-219 (GLAI…AYLS), 236-256 (SGEL…FLWF), 263-283 (VFMG…IAVL), 288-308 (ILLV…ILQV), and 338-358 (VIVR…ATLK).

Belongs to the glycosyltransferase 4 family. MraY subfamily. The cofactor is Mg(2+).

The protein localises to the cell inner membrane. The catalysed reaction is UDP-N-acetyl-alpha-D-muramoyl-L-alanyl-gamma-D-glutamyl-meso-2,6-diaminopimeloyl-D-alanyl-D-alanine + di-trans,octa-cis-undecaprenyl phosphate = di-trans,octa-cis-undecaprenyl diphospho-N-acetyl-alpha-D-muramoyl-L-alanyl-D-glutamyl-meso-2,6-diaminopimeloyl-D-alanyl-D-alanine + UMP. The protein operates within cell wall biogenesis; peptidoglycan biosynthesis. In terms of biological role, catalyzes the initial step of the lipid cycle reactions in the biosynthesis of the cell wall peptidoglycan: transfers peptidoglycan precursor phospho-MurNAc-pentapeptide from UDP-MurNAc-pentapeptide onto the lipid carrier undecaprenyl phosphate, yielding undecaprenyl-pyrophosphoryl-MurNAc-pentapeptide, known as lipid I. This is Phospho-N-acetylmuramoyl-pentapeptide-transferase from Shewanella oneidensis (strain ATCC 700550 / JCM 31522 / CIP 106686 / LMG 19005 / NCIMB 14063 / MR-1).